We begin with the raw amino-acid sequence, 185 residues long: Large ribosomal subunit protein uL5 (185 aa).

This sequence belongs to the universal ribosomal protein uL5 family. As to quaternary structure, part of the 50S ribosomal subunit; contacts the 5S rRNA and probably tRNA. Forms a bridge to the 30S subunit in the 70S ribosome.

This is one of the proteins that bind and probably mediate the attachment of the 5S RNA into the large ribosomal subunit, where it forms part of the central protuberance. In the 70S ribosome it contacts protein S13 of the 30S subunit (bridge B1b), connecting the 2 subunits; this bridge is implicated in subunit movement. May contact the P site tRNA; the 5S rRNA and some of its associated proteins might help stabilize positioning of ribosome-bound tRNAs. This chain is Large ribosomal subunit protein uL5, found in Haloquadratum walsbyi (strain DSM 16790 / HBSQ001).